Reading from the N-terminus, the 359-residue chain is Protein RecA (359 aa).

64–71 contacts ATP; sequence GHESSGKT. The tract at residues 329–359 is disordered; it reads KYSNKDSNDSPKEGSKIKTKVNPAVTQDELI. A compositionally biased stretch (basic and acidic residues) spans 331-344; that stretch reads SNKDSNDSPKEGSK.

Belongs to the RecA family.

Its subcellular location is the cytoplasm. Functionally, can catalyze the hydrolysis of ATP in the presence of single-stranded DNA, the ATP-dependent uptake of single-stranded DNA by duplex DNA, and the ATP-dependent hybridization of homologous single-stranded DNAs. It interacts with LexA causing its activation and leading to its autocatalytic cleavage. This Francisella tularensis subsp. tularensis (strain FSC 198) protein is Protein RecA.